Consider the following 664-residue polypeptide: Lamin tail domain-containing protein 2 (664 aa).

The tract at residues 1-40 (MAPKSCQESEDKQVSPAPAGVQPDSSDLGSPVGTPVDRVA) is disordered. The stretch at 118–169 (QDKFLRNQVQKLTLELKAQKEQAQQEKQQLEEKLQQNLWAKQQLEAELQTFQ) forms a coiled coil. Positions 245-260 (SDQKQSQPPTSETYTL) are enriched in polar residues. Disordered stretches follow at residues 245–272 (SDQKQSQPPTSETYTLDSEGATKHTEKP) and 286–329 (TSSS…MQEH). The span at 286–298 (TSSSERTQSDTSS) shows a compositional bias: low complexity. Over residues 312–325 (GHPSQGTNLASSEQ) the composition is skewed to polar residues. An LTD domain is found at 362-481 (PYTRPQLNPF…QVLSEHQATP (120 aa)). Positions 504–563 (SESEPDVHPGEQQCRPSSPQKGRAKDAGARRKKPGPGVRQHRHSSTSGLRASRTLHPTET) are disordered. A compositionally biased stretch (basic residues) spans 533 to 547 (RRKKPGPGVRQHRHS).

The sequence is that of Lamin tail domain-containing protein 2 (Lmntd2) from Mus musculus (Mouse).